A 71-amino-acid polypeptide reads, in one-letter code: Small ribosomal subunit protein bS18 (71 aa).

The protein belongs to the bacterial ribosomal protein bS18 family. Part of the 30S ribosomal subunit. Forms a tight heterodimer with protein bS6.

In terms of biological role, binds as a heterodimer with protein bS6 to the central domain of the 16S rRNA, where it helps stabilize the platform of the 30S subunit. The chain is Small ribosomal subunit protein bS18 from Thermosynechococcus vestitus (strain NIES-2133 / IAM M-273 / BP-1).